A 235-amino-acid polypeptide reads, in one-letter code: Secretory carrier-associated membrane protein 5A (235 aa).

Over 1-39 the chain is Cytoplasmic; it reads MSDKPNNFPPLPRFIPLKPCFYQDFDTDIPDLHRTTAKR. The helical transmembrane segment at 40-60 threads the bilayer; it reads LYYLWMLNSITLGVNLIGCLA. At 61-67 the chain is on the extracellular side; it reads WLIGGGS. The chain crosses the membrane as a helical span at residues 68 to 88; sequence ATNFGLAFLWLILFTPCSYVC. At 89 to 102 the chain is on the cytoplasmic side; it reads WFRPIYKAFKTDSS. The chain crosses the membrane as a helical span at residues 103–125; sequence FNFMAFFFTFTAQLVISIIQAVG. Topologically, residues 126–148 are extracellular; the sequence is IPGWGVCGWIASISFFGTNVGSA. A helical membrane pass occupies residues 149–169; the sequence is VVMLIPTIMFTAVAVLSFVAL. At 170-235 the chain is on the cytoplasmic side; sequence TKVHRFYRGA…TPNYGYSNEM (66 aa).

The protein belongs to the SCAMP family. SCAMP5 subfamily.

The protein resides in the cell membrane. The protein localises to the golgi apparatus membrane. Its subcellular location is the golgi apparatus. It localises to the trans-Golgi network membrane. It is found in the recycling endosome membrane. The protein resides in the cytoplasmic vesicle. The protein localises to the secretory vesicle. Its subcellular location is the synaptic vesicle membrane. In terms of biological role, required for the calcium-dependent exocytosis of signal sequence-containing cytokines. Probably acts in cooperation with the SNARE machinery. The protein is Secretory carrier-associated membrane protein 5A (scamp5-a) of Xenopus laevis (African clawed frog).